The sequence spans 348 residues: Phospho-2-dehydro-3-deoxyheptonate aldolase, Trp-sensitive (348 aa).

This sequence belongs to the class-I DAHP synthase family.

It carries out the reaction D-erythrose 4-phosphate + phosphoenolpyruvate + H2O = 7-phospho-2-dehydro-3-deoxy-D-arabino-heptonate + phosphate. Its pathway is metabolic intermediate biosynthesis; chorismate biosynthesis; chorismate from D-erythrose 4-phosphate and phosphoenolpyruvate: step 1/7. Functionally, stereospecific condensation of phosphoenolpyruvate (PEP) and D-erythrose-4-phosphate (E4P) giving rise to 3-deoxy-D-arabino-heptulosonate-7-phosphate (DAHP). The chain is Phospho-2-dehydro-3-deoxyheptonate aldolase, Trp-sensitive (aroH) from Escherichia coli O157:H7.